The primary structure comprises 239 residues: Glandular kallikrein, prostatic (239 aa).

Residues valine 1–alanine 236 enclose the Peptidase S1 domain. Disulfide bonds link cysteine 7–cysteine 151, cysteine 26–cysteine 42, cysteine 128–cysteine 197, cysteine 162–cysteine 176, and cysteine 187–cysteine 212. The Charge relay system role is filled by histidine 41. Asparagine 78 carries an N-linked (GlcNAc...) asparagine glycan. The active-site Charge relay system is the aspartate 96. Asparagine 169 carries an N-linked (GlcNAc...) asparagine glycan. The active-site Charge relay system is serine 191.

Belongs to the peptidase S1 family. Kallikrein subfamily.

It catalyses the reaction Preferential cleavage of Arg-|-Xaa bonds in small molecule substrates. Highly selective action to release kallidin (lysyl-bradykinin) from kininogen involves hydrolysis of Met-|-Xaa or Leu-|-Xaa.. In terms of biological role, glandular kallikreins cleave Met-Lys and Arg-Ser bonds in kininogen to release Lys-bradykinin. The sequence is that of Glandular kallikrein, prostatic from Cavia porcellus (Guinea pig).